We begin with the raw amino-acid sequence, 321 residues long: UDP-N-acetylenolpyruvoylglucosamine reductase (321 aa).

Residues 39–205 (RTGGLAELFY…TAALLEGEPG (167 aa)) form the FAD-binding PCMH-type domain. Arginine 185 is a catalytic residue. Serine 234 serves as the catalytic Proton donor. Residue glutamate 304 is part of the active site.

The protein belongs to the MurB family. It depends on FAD as a cofactor.

It localises to the cytoplasm. The enzyme catalyses UDP-N-acetyl-alpha-D-muramate + NADP(+) = UDP-N-acetyl-3-O-(1-carboxyvinyl)-alpha-D-glucosamine + NADPH + H(+). It functions in the pathway cell wall biogenesis; peptidoglycan biosynthesis. Its function is as follows. Cell wall formation. This Bartonella quintana (strain Toulouse) (Rochalimaea quintana) protein is UDP-N-acetylenolpyruvoylglucosamine reductase.